Here is a 908-residue protein sequence, read N- to C-terminus: NADH-quinone oxidoreductase subunit G (908 aa).

The 82-residue stretch at Ala-2–Glu-83 folds into the 2Fe-2S ferredoxin-type domain. Residues Cys-34, Cys-45, Cys-48, and Cys-67 each coordinate [2Fe-2S] cluster. A 4Fe-4S His(Cys)3-ligated-type domain is found at Glu-83–Gly-122. Positions 99, 103, 106, 112, 151, 154, 157, 201, 228, 231, 235, and 263 each coordinate [4Fe-4S] cluster. A 4Fe-4S Mo/W bis-MGD-type domain is found at Met-221–Asp-277.

The protein belongs to the complex I 75 kDa subunit family. Composed of 13 different subunits. Subunits NuoCD, E, F, and G constitute the peripheral sector of the complex. [2Fe-2S] cluster is required as a cofactor. Requires [4Fe-4S] cluster as cofactor.

It carries out the reaction a quinone + NADH + 5 H(+)(in) = a quinol + NAD(+) + 4 H(+)(out). In terms of biological role, NDH-1 shuttles electrons from NADH, via FMN and iron-sulfur (Fe-S) centers, to quinones in the respiratory chain. The immediate electron acceptor for the enzyme in this species is believed to be ubiquinone. Couples the redox reaction to proton translocation (for every two electrons transferred, four hydrogen ions are translocated across the cytoplasmic membrane), and thus conserves the redox energy in a proton gradient. The protein is NADH-quinone oxidoreductase subunit G (nuoG) of Escherichia coli O157:H7.